A 932-amino-acid chain; its full sequence is Isoleucine--tRNA ligase (932 aa).

Positions 57–67 match the 'HIGH' region motif; it reads PYANGDIHIGT. Glu-559 provides a ligand contact to L-isoleucyl-5'-AMP. The 'KMSKS' region signature appears at 600 to 604; sequence KMSKS. Position 603 (Lys-603) interacts with ATP. Zn(2+) contacts are provided by Cys-899, Cys-902, Cys-919, and Cys-922.

The protein belongs to the class-I aminoacyl-tRNA synthetase family. IleS type 1 subfamily. Monomer. Requires Zn(2+) as cofactor.

The protein resides in the cytoplasm. The enzyme catalyses tRNA(Ile) + L-isoleucine + ATP = L-isoleucyl-tRNA(Ile) + AMP + diphosphate. In terms of biological role, catalyzes the attachment of isoleucine to tRNA(Ile). As IleRS can inadvertently accommodate and process structurally similar amino acids such as valine, to avoid such errors it has two additional distinct tRNA(Ile)-dependent editing activities. One activity is designated as 'pretransfer' editing and involves the hydrolysis of activated Val-AMP. The other activity is designated 'posttransfer' editing and involves deacylation of mischarged Val-tRNA(Ile). The polypeptide is Isoleucine--tRNA ligase (Caldanaerobacter subterraneus subsp. tengcongensis (strain DSM 15242 / JCM 11007 / NBRC 100824 / MB4) (Thermoanaerobacter tengcongensis)).